The chain runs to 256 residues: Imidazole glycerol phosphate synthase subunit HisF (256 aa).

Residues aspartate 11 and aspartate 130 contribute to the active site.

Belongs to the HisA/HisF family. Heterodimer of HisH and HisF.

The protein resides in the cytoplasm. The enzyme catalyses 5-[(5-phospho-1-deoxy-D-ribulos-1-ylimino)methylamino]-1-(5-phospho-beta-D-ribosyl)imidazole-4-carboxamide + L-glutamine = D-erythro-1-(imidazol-4-yl)glycerol 3-phosphate + 5-amino-1-(5-phospho-beta-D-ribosyl)imidazole-4-carboxamide + L-glutamate + H(+). Its pathway is amino-acid biosynthesis; L-histidine biosynthesis; L-histidine from 5-phospho-alpha-D-ribose 1-diphosphate: step 5/9. Functionally, IGPS catalyzes the conversion of PRFAR and glutamine to IGP, AICAR and glutamate. The HisF subunit catalyzes the cyclization activity that produces IGP and AICAR from PRFAR using the ammonia provided by the HisH subunit. This is Imidazole glycerol phosphate synthase subunit HisF from Prochlorococcus marinus (strain AS9601).